A 436-amino-acid chain; its full sequence is Septin-7 (436 aa).

N-acetylserine is present on serine 2. The residue at position 29 (tyrosine 29) is a Phosphotyrosine. A Septin-type G domain is found at arginine 46 to alanine 315. Residues arginine 46–valine 316 are interaction with SEPTIN12. The tract at residues glycine 56–serine 63 is G1 motif. Glycine 56–serine 63 contacts GTP. At serine 76 the chain carries Phosphoserine. Residues threonine 89, glycine 115, and lysine 194–glutamate 202 contribute to the GTP site. Residues aspartate 112–glycine 115 form a G3 motif region. The interval alanine 193–aspartate 196 is G4 motif. Threonine 227 bears the Phosphothreonine mark. Positions 249 and 264 each coordinate GTP. Positions threonine 331 to phenylalanine 436 form a coiled coil. Serine 333 carries the phosphoserine modification. N6-acetyllysine is present on lysine 372. Basic and acidic residues predominate over residues glutamate 377–asparagine 409. The disordered stretch occupies residues glutamate 377–phenylalanine 436. Phosphoserine is present on serine 423. Threonine 425 carries the post-translational modification Phosphothreonine.

It belongs to the TRAFAC class TrmE-Era-EngA-EngB-Septin-like GTPase superfamily. Septin GTPase family. As to quaternary structure, septins polymerize into heterooligomeric protein complexes that form filaments, and associate with cellular membranes, actin filaments and microtubules. GTPase activity is required for filament formation. Filaments are assembled from asymmetrical heterotrimers, composed of SEPTIN2, SEPTIN6 and SEPTIN7 that associate head-to-head to form a hexameric unit. Within the trimer, directly interacts with SEPTIN6, while interaction with SEPTIN2 seems indirect. In the absence of SEPTIN6, forms homodimers. Interacts directly with CENPE and links CENPE to septin filaments composed of SEPTIN2, SEPTIN6 and SEPTIN7. Interacts with SEPTIN5. Component of a septin core octameric complex consisting of SEPTIN12, SEPTIN7, SEPTIN6 and SEPTIN2 or SEPTIN4 in the order 12-7-6-2-2-6-7-12 or 12-7-6-4-4-6-7-12 and located in the sperm annulus; the SEPTIN12:SEPTIN7 association is mediated by the respective GTP-binding domains. Interacts with SEPTIN2, SEPTIN7, SEPTIN8, SEPTIN9 and SEPTIN11.

Its subcellular location is the cytoplasm. The protein localises to the chromosome. It localises to the centromere. It is found in the kinetochore. The protein resides in the cytoskeleton. Its subcellular location is the spindle. The protein localises to the cleavage furrow. It localises to the midbody. It is found in the cilium axoneme. The protein resides in the cell projection. Its subcellular location is the cilium. The protein localises to the flagellum. In terms of biological role, filament-forming cytoskeletal GTPase. Required for normal organization of the actin cytoskeleton. Required for normal progress through mitosis. Involved in cytokinesis. Required for normal association of CENPE with the kinetochore. Plays a role in ciliogenesis and collective cell movements. Forms a filamentous structure with SEPTIN12, SEPTIN6, SEPTIN2 and probably SEPTIN4 at the sperm annulus which is required for the structural integrity and motility of the sperm tail during postmeiotic differentiation. This Rattus norvegicus (Rat) protein is Septin-7.